Here is a 477-residue protein sequence, read N- to C-terminus: Diacylglycerol O-acyltransferase 1-2 (477 aa).

The interval 1-48 (MAPPPSLAPDRGGGEPDDALRLRARAAAAAGDAPAPQQQQEQRHQEQQ) is disordered. Over residues 12–21 (GGGEPDDALR) the composition is skewed to basic and acidic residues. A compositionally biased stretch (low complexity) spans 25-40 (RAAAAAGDAPAPQQQQ). 7 consecutive transmembrane segments (helical) span residues 79 to 99 (HAGL…RLII), 123 to 143 (WPLL…LMVE), 155 to 175 (VVIL…VVVI), 182 to 202 (VLSG…LVSF), 230 to 250 (NIKW…TLCY), 263 to 283 (GWVV…GFII), and 319 to 339 (VWLC…AELL). The short motif at 346–352 (FYKDWWN) is the FYXDWWN motif element. Transmembrane regions (helical) follow at residues 387–407 (GVAI…CVAV), 409–429 (CHIF…LVFL), and 442–462 (VGNM…CVLL). The active site involves His401.

Belongs to the membrane-bound acyltransferase family. Sterol o-acyltransferase subfamily.

It localises to the endoplasmic reticulum membrane. It carries out the reaction an acyl-CoA + a 1,2-diacyl-sn-glycerol = a triacyl-sn-glycerol + CoA. It participates in glycerolipid metabolism; triacylglycerol biosynthesis. Its function is as follows. Involved in triacylglycerol (TAG) synthesis. Catalyzes the acylation of the sn-3 hydroxy group of sn-1,2-diacylglycerol using acyl-CoA. The polypeptide is Diacylglycerol O-acyltransferase 1-2 (Oryza sativa subsp. japonica (Rice)).